Consider the following 183-residue polypeptide: uncharacterized protein (183 aa).

A helical transmembrane segment spans residues 7-23 (LFFTALCFGLTGCIAPP).

It is found in the membrane. This is an uncharacterized protein from Haemophilus influenzae (strain ATCC 51907 / DSM 11121 / KW20 / Rd).